The sequence spans 331 residues: Beta-ketoacyl-[acyl-carrier-protein] synthase III (331 aa).

Catalysis depends on residues C115 and H255. The interval 256–260 (QANFR) is ACP-binding. N285 is a catalytic residue.

The protein belongs to the thiolase-like superfamily. FabH family. Homodimer.

It localises to the cytoplasm. The enzyme catalyses malonyl-[ACP] + acetyl-CoA + H(+) = 3-oxobutanoyl-[ACP] + CO2 + CoA. It participates in lipid metabolism; fatty acid biosynthesis. Its function is as follows. Catalyzes the condensation reaction of fatty acid synthesis by the addition to an acyl acceptor of two carbons from malonyl-ACP. Catalyzes the first condensation reaction which initiates fatty acid synthesis and may therefore play a role in governing the total rate of fatty acid production. Possesses both acetoacetyl-ACP synthase and acetyl transacylase activities. Its substrate specificity determines the biosynthesis of branched-chain and/or straight-chain of fatty acids. This Helicobacter pylori (strain Shi470) protein is Beta-ketoacyl-[acyl-carrier-protein] synthase III.